The following is a 171-amino-acid chain: MIILVMLNTRFFNPYCFQPSSSLCRPSYSLFSGILACISSSKILPFENFFKSTLLGGFFTVVGHSLCRYLSCHYLPSSHRLTGKQRFSHSQSLFPPHPLCFLRRCCYYLLRLGKVTLEGSLWYRPNPLAFFPWKELKDGSFTTSVGSALFDIGDWFGFLSFMSYSCDMPTP.

This is an uncharacterized protein from Saccharomyces cerevisiae (strain ATCC 204508 / S288c) (Baker's yeast).